The following is a 71-amino-acid chain: Allergen Art v 2 (71 aa).

Glycosylated. High-mannose oligosaccharides (Man(5-9)GlcNAc(2)).

The protein is Allergen Art v 2 of Artemisia vulgaris (Mugwort).